Reading from the N-terminus, the 296-residue chain is Ribosomal RNA small subunit methyltransferase H (296 aa).

S-adenosyl-L-methionine-binding positions include 38–40, Glu57, Phe88, Asp103, and His110; that span reads GVH.

It belongs to the methyltransferase superfamily. RsmH family.

The protein localises to the cytoplasm. The catalysed reaction is cytidine(1402) in 16S rRNA + S-adenosyl-L-methionine = N(4)-methylcytidine(1402) in 16S rRNA + S-adenosyl-L-homocysteine + H(+). Its function is as follows. Specifically methylates the N4 position of cytidine in position 1402 (C1402) of 16S rRNA. The protein is Ribosomal RNA small subunit methyltransferase H of Borreliella burgdorferi (strain ZS7) (Borrelia burgdorferi).